The chain runs to 47 residues: Potassium channel toxin alpha-KTx 7.1 (47 aa).

The signal sequence occupies residues 1–12 (RGSVDYKDDDDK). 3 disulfides stabilise this stretch: cysteine 16–cysteine 37, cysteine 22–cysteine 42, and cysteine 26–cysteine 44.

This sequence belongs to the short scorpion toxin superfamily. Potassium channel inhibitor family. Alpha-KTx 07 subfamily. In terms of tissue distribution, expressed by the venom gland.

The protein resides in the secreted. In terms of biological role, potent inhibitor of the A-type voltage-gated potassium channels. Most potent inhibitor of Kv1.2/KCNA2 channels. Reversibly block the Shaker B potassium-channels (Kv1.1 sub-family). This is Potassium channel toxin alpha-KTx 7.1 (PTX-1) from Pandinus imperator (Emperor scorpion).